The primary structure comprises 287 residues: Uroplakin-3a (287 aa).

The N-terminal stretch at 1–18 (MPPLWALLALGCLRFGSA) is a signal peptide. The Lumenal portion of the chain corresponds to 19 to 207 (VNLQPQLASV…DTWPGRRSGG (189 aa)). N-linked (GlcNAc...) asparagine glycosylation is found at Asn74, Asn139, and Asn170. Residues 208–235 (MIVITSILGSLPFFLLVGFAGAIALSLV) traverse the membrane as a helical segment. The Cytoplasmic segment spans residues 236–287 (DMGSSDGETTHDSQITQEAVPKSLGASESSYTSVNRGPPLDRAEVYSSKLQD). The disordered stretch occupies residues 242–287 (GETTHDSQITQEAVPKSLGASESSYTSVNRGPPLDRAEVYSSKLQD). Positions 261–270 (ASESSYTSVN) are enriched in polar residues.

It belongs to the uroplakin-3 family. As to quaternary structure, heterodimer with uroplakin-1B (UPK1B). In terms of tissue distribution, expressed in ureter.

It is found in the endoplasmic reticulum membrane. Functionally, component of the asymmetric unit membrane (AUM); a highly specialized biomembrane elaborated by terminally differentiated urothelial cells. May play an important role in AUM-cytoskeleton interaction in terminally differentiated urothelial cells. It also contributes to the formation of urothelial glycocalyx which may play an important role in preventing bacterial adherence. This chain is Uroplakin-3a (UPK3A), found in Homo sapiens (Human).